A 500-amino-acid chain; its full sequence is Protein nucleotidyltransferase YdiU (500 aa).

Gly98, Gly100, Arg101, Lys124, Asp136, Gly137, Arg187, and Arg194 together coordinate ATP. The active-site Proton acceptor is the Asp263. Mg(2+) is bound by residues Asn264 and Asp273. Asp273 is an ATP binding site.

The protein belongs to the SELO family. The cofactor is Mg(2+). Mn(2+) serves as cofactor.

It carries out the reaction L-seryl-[protein] + ATP = 3-O-(5'-adenylyl)-L-seryl-[protein] + diphosphate. The catalysed reaction is L-threonyl-[protein] + ATP = 3-O-(5'-adenylyl)-L-threonyl-[protein] + diphosphate. It catalyses the reaction L-tyrosyl-[protein] + ATP = O-(5'-adenylyl)-L-tyrosyl-[protein] + diphosphate. The enzyme catalyses L-histidyl-[protein] + UTP = N(tele)-(5'-uridylyl)-L-histidyl-[protein] + diphosphate. It carries out the reaction L-seryl-[protein] + UTP = O-(5'-uridylyl)-L-seryl-[protein] + diphosphate. The catalysed reaction is L-tyrosyl-[protein] + UTP = O-(5'-uridylyl)-L-tyrosyl-[protein] + diphosphate. Functionally, nucleotidyltransferase involved in the post-translational modification of proteins. It can catalyze the addition of adenosine monophosphate (AMP) or uridine monophosphate (UMP) to a protein, resulting in modifications known as AMPylation and UMPylation. In Herminiimonas arsenicoxydans, this protein is Protein nucleotidyltransferase YdiU.